The sequence spans 352 residues: DNA-directed RNA polymerase subunit alpha (352 aa).

The segment at 1-226 (MLISQRPTLT…ELFGLARELN (226 aa)) is alpha N-terminal domain (alpha-NTD). The alpha C-terminal domain (alpha-CTD) stretch occupies residues 243–352 (HIASFGLPIE…EQDYAETEQL (110 aa)). The segment at 324–352 (DASTGTWSDSGTFSDNDGGEQDYAETEQL) is disordered. The span at 326 to 338 (STGTWSDSGTFSD) shows a compositional bias: polar residues. The segment covering 340–352 (DGGEQDYAETEQL) has biased composition (acidic residues).

It belongs to the RNA polymerase alpha chain family. As to quaternary structure, homodimer. The RNAP catalytic core consists of 2 alpha, 1 beta, 1 beta' and 1 omega subunit. When a sigma factor is associated with the core the holoenzyme is formed, which can initiate transcription.

It carries out the reaction RNA(n) + a ribonucleoside 5'-triphosphate = RNA(n+1) + diphosphate. Its function is as follows. DNA-dependent RNA polymerase catalyzes the transcription of DNA into RNA using the four ribonucleoside triphosphates as substrates. This chain is DNA-directed RNA polymerase subunit alpha, found in Nocardia farcinica (strain IFM 10152).